The following is a 78-amino-acid chain: Large ribosomal subunit protein bL28 (78 aa).

The interval 1 to 21 (MSRVCQVTGKKPMVGNNRSHA) is disordered.

Belongs to the bacterial ribosomal protein bL28 family.

This chain is Large ribosomal subunit protein bL28, found in Shewanella loihica (strain ATCC BAA-1088 / PV-4).